A 499-amino-acid chain; its full sequence is NADH-quinone oxidoreductase subunit N (499 aa).

14 helical membrane passes run 16-36 (AAFSMSVVGGVGLAMIVLDAF), 42-62 (AIPWLGVAALGVSAVWEITHL), 77-97 (GGFVAFINLIILLTGLATILL), 109-129 (YGEVYALIMFCTVGMIMLGSA), 133-153 (VSIFLGLETMSVCLYVLTGFI), 167-187 (FLLGAFSTGFFLYGIALMYGA), 208-228 (LLFWGGFALFLVGFFFKVSAA), 252-272 (ATKAAAFAALILVLVHAVPGG), 274-294 (WQLSVAAVAVLTMVIGNVMAL), 302-322 (LLAYSSIAHAGYLLVGLSAGT), 327-347 (AGALFYLLVYAVMNIGAFGVM), 376-396 (GSTMGVFMLSLIGFPPLGGFI), 411-433 (TWLVVIGVLMSALSAYYYLRVVY), and 463-483 (GTLVVCAVALVVLGVFFGGVL).

The protein belongs to the complex I subunit 2 family. In terms of assembly, NDH-1 is composed of 14 different subunits. Subunits NuoA, H, J, K, L, M, N constitute the membrane sector of the complex.

Its subcellular location is the cell inner membrane. The enzyme catalyses a quinone + NADH + 5 H(+)(in) = a quinol + NAD(+) + 4 H(+)(out). Its function is as follows. NDH-1 shuttles electrons from NADH, via FMN and iron-sulfur (Fe-S) centers, to quinones in the respiratory chain. The immediate electron acceptor for the enzyme in this species is believed to be a menaquinone. Couples the redox reaction to proton translocation (for every two electrons transferred, four hydrogen ions are translocated across the cytoplasmic membrane), and thus conserves the redox energy in a proton gradient. The polypeptide is NADH-quinone oxidoreductase subunit N (Salinibacter ruber (strain DSM 13855 / M31)).